The chain runs to 42 residues: Delta-hexatoxin-Hv1b (42 aa).

4 disulfides stabilise this stretch: C1–C15, C8–C20, C14–C31, and C16–C42.

This sequence belongs to the neurotoxin 06 (delta-actx) family. In terms of tissue distribution, expressed by the venom gland.

The protein resides in the secreted. In terms of biological role, lethal neurotoxin. Slows the inactivation of tetrodotoxin-sensitive voltage-gated sodium channels (Nav) by binding to site 3 of the channel, resulting in repetitive firing in autonomic and motor nerve fibers. The polypeptide is Delta-hexatoxin-Hv1b (Hadronyche versuta (Blue mountains funnel-web spider)).